Here is a 414-residue protein sequence, read N- to C-terminus: Light-independent protochlorophyllide reductase subunit N (414 aa).

[4Fe-4S] cluster contacts are provided by Cys-16, Cys-41, and Cys-98.

Belongs to the BchN/ChlN family. Protochlorophyllide reductase is composed of three subunits; BchL, BchN and BchB. Forms a heterotetramer of two BchB and two BchN subunits. It depends on [4Fe-4S] cluster as a cofactor.

The enzyme catalyses chlorophyllide a + oxidized 2[4Fe-4S]-[ferredoxin] + 2 ADP + 2 phosphate = protochlorophyllide a + reduced 2[4Fe-4S]-[ferredoxin] + 2 ATP + 2 H2O. Its pathway is porphyrin-containing compound metabolism; bacteriochlorophyll biosynthesis (light-independent). Functionally, component of the dark-operative protochlorophyllide reductase (DPOR) that uses Mg-ATP and reduced ferredoxin to reduce ring D of protochlorophyllide (Pchlide) to form chlorophyllide a (Chlide). This reaction is light-independent. The NB-protein (BchN-BchB) is the catalytic component of the complex. The chain is Light-independent protochlorophyllide reductase subunit N from Roseiflexus castenholzii (strain DSM 13941 / HLO8).